We begin with the raw amino-acid sequence, 165 residues long: Chorismate pyruvate-lyase (165 aa).

The substrate site is built by methionine 35, arginine 77, leucine 115, and glutamate 156.

It belongs to the UbiC family. Monomer.

It is found in the cytoplasm. The enzyme catalyses chorismate = 4-hydroxybenzoate + pyruvate. The protein operates within cofactor biosynthesis; ubiquinone biosynthesis. In terms of biological role, removes the pyruvyl group from chorismate, with concomitant aromatization of the ring, to provide 4-hydroxybenzoate (4HB) for the ubiquinone pathway. In Escherichia coli (strain K12 / MC4100 / BW2952), this protein is Chorismate pyruvate-lyase.